The sequence spans 56 residues: Cecropin-A2 (56 aa).

The residue at position 55 (arginine 55) is an Arginine amide.

This sequence belongs to the cecropin family.

It localises to the secreted. In terms of biological role, cecropins have lytic and antibacterial activity against several Gram-positive and Gram-negative bacteria. In Drosophila yakuba (Fruit fly), this protein is Cecropin-A2 (CecA2).